The primary structure comprises 1039 residues: DIS3-like exonuclease 1 (1039 aa).

One can recognise a CSD1 domain in the interval 221–309; that stretch reads PEHLPLEILE…KGRNGALCEN (89 aa). The 67-residue stretch at 359 to 425 folds into the CSD2 domain; sequence VLVMPWDYRI…AEIATILVEN (67 aa). The RNB domain occupies 458 to 807; the sequence is RLDLRKTHLV…VHRLLLAAVN (350 aa).

This sequence belongs to the RNR ribonuclease family. Component of the RNA exosome complex. Mg(2+) is required as a cofactor.

It localises to the cytoplasm. It catalyses the reaction Exonucleolytic cleavage in the 3'- to 5'-direction to yield nucleoside 5'-phosphates.. Catalytic component of the RNA exosome complex which has 3'-&gt;5' exoribonuclease activity and participates in a multitude of cellular RNA processing and degradation events. The polypeptide is DIS3-like exonuclease 1 (dis3l) (Xenopus tropicalis (Western clawed frog)).